Here is a 314-residue protein sequence, read N- to C-terminus: GTP cyclohydrolase FolE2 (314 aa).

The segment at 290 to 314 (DASAWSAPQASAPDQQESFATGNER) is disordered. The span at 291-305 (ASAWSAPQASAPDQQ) shows a compositional bias: low complexity.

This sequence belongs to the GTP cyclohydrolase IV family.

It carries out the reaction GTP + H2O = 7,8-dihydroneopterin 3'-triphosphate + formate + H(+). Its pathway is cofactor biosynthesis; 7,8-dihydroneopterin triphosphate biosynthesis; 7,8-dihydroneopterin triphosphate from GTP: step 1/1. Its function is as follows. Converts GTP to 7,8-dihydroneopterin triphosphate. The sequence is that of GTP cyclohydrolase FolE2 from Pseudomonas putida (strain ATCC 700007 / DSM 6899 / JCM 31910 / BCRC 17059 / LMG 24140 / F1).